A 154-amino-acid chain; its full sequence is MFRGFKEFLSRGNIVDLAVAVVIGTAFTALITKFTDSIITPLINRVGVNQQTNISPLRIDIGGDQAIDLNIVLSAAINFLLIALVVYFLVVLPYTTIRKHGEVEQFDTDLIGNQVVLLAEIRDLLAQSNGAPSGRHVDTADLTPTPNHEPRADT.

The next 2 membrane-spanning stretches (helical) occupy residues 12–32 (GNIV…ALIT) and 71–91 (IVLS…FLVV). Positions 129-154 (NGAPSGRHVDTADLTPTPNHEPRADT) are disordered.

The protein belongs to the MscL family. Homopentamer.

The protein localises to the cell membrane. Its function is as follows. Channel that opens in response to stretch forces in the membrane lipid bilayer. May participate in the regulation of osmotic pressure changes within the cell. The chain is Large-conductance mechanosensitive channel from Mycobacterium leprae (strain Br4923).